The chain runs to 224 residues: Ribonuclease 3 (224 aa).

The region spanning 5 to 127 (ANRLQRRLGY…IIGAIYLDSD (123 aa)) is the RNase III domain. Glu40 contributes to the Mg(2+) binding site. Asp44 is an active-site residue. Positions 113 and 116 each coordinate Mg(2+). The active site involves Glu116. The 71-residue stretch at 154 to 224 (DPKTRLQECL…AELALKQLES (71 aa)) folds into the DRBM domain.

This sequence belongs to the ribonuclease III family. Homodimer. Requires Mg(2+) as cofactor.

It localises to the cytoplasm. It catalyses the reaction Endonucleolytic cleavage to 5'-phosphomonoester.. Functionally, digests double-stranded RNA. Involved in the processing of primary rRNA transcript to yield the immediate precursors to the large and small rRNAs (23S and 16S). Processes some mRNAs, and tRNAs when they are encoded in the rRNA operon. Processes pre-crRNA and tracrRNA of type II CRISPR loci if present in the organism. The polypeptide is Ribonuclease 3 (Photobacterium profundum (strain SS9)).